A 395-amino-acid polypeptide reads, in one-letter code: RNA demethylase ALKBH5 (395 aa).

2 disordered regions span residues 1–28 and 47–83; these read MAAASGYTDLREKLKSMTSRDNYKAGSR and AAEPYPASGTTKRKYQEDSDPERSDYEEHQLQKEEEA. Ala-2 is modified (N-acetylalanine). Lys-58 is covalently cross-linked (Glycyl lysine isopeptide (Lys-Gly) (interchain with G-Cter in ubiquitin)). The span at 60 to 83 shows a compositional bias: basic and acidic residues; it reads KYQEDSDPERSDYEEHQLQKEEEA. Phosphoserine occurs at positions 65 and 70. Residues 68–117 are a coiled coil; it reads ERSDYEEHQLQKEEEARKVKSGIRQIRLFSQDECSKIEARIDEVVSRAEK. Tyr-72 carries the post-translational modification Phosphotyrosine. Residue Lys-87 forms a Glycyl lysine isopeptide (Lys-Gly) (interchain with G-Cter in SUMO1) linkage. The residue at position 88 (Ser-88) is a Phosphoserine. Lys-133 is subject to N6-acetyllysine. Residue Tyr-140 is part of the active site. Residues Asn-194, Tyr-196, and His-205 each coordinate 2-oxoglutarate. A disulfide bond links Cys-231 and Cys-268. N6-acetyllysine is present on Lys-236. The 2-oxoglutarate site is built by His-267 and Arg-278. Residues 294 to 395 form a disordered region; sequence ETKSLSSSTL…PTRKVKMRRH (102 aa). Over residues 296-306 the composition is skewed to low complexity; that stretch reads KSLSSSTLPPS. Lys-322 is covalently cross-linked (Glycyl lysine isopeptide (Lys-Gly) (interchain with G-Cter in SUMO1)). Ser-326 bears the Phosphoserine mark. Lys-329 is covalently cross-linked (Glycyl lysine isopeptide (Lys-Gly) (interchain with G-Cter in SUMO2)). Positions 329–350 are enriched in basic and acidic residues; that stretch reads KADPDAAHRPRILEMDKEENRR. Arg-360 carries the omega-N-methylarginine modification. Residues Ser-362, Ser-372, Ser-375, and Ser-385 each carry the phosphoserine modification.

Belongs to the alkB family. As to quaternary structure, monomer. Interacts with RBM33; promoting desumoylation by SENP1 and recruitment to N(6)-methyladenosine-containing mRNAs. Interacts (when acetylated by KAT8) with PSPC1; interaction facilitates recognition of N(6)-methyladenosine (m6A) mRNA. The cofactor is Fe(2+). In terms of processing, phosphorylated at Ser-88 and Ser-326 in response to reactive oxygen species (ROS), promoting sumoylation and inactivation. Post-translationally, acetylated by KAT8 at Lys-236, promoting interaction with PSPC1, thereby facilitating recognition of N(6)-methyladenosine (m6A) mRNA by ALKBH5. Deacetylated at Lys-236 by HDAC7. Sumoylated at Lys-87 and Lys-322 by PIAS4 following phosphorylation at Ser-88 and Ser-326 in response to reactive oxygen species (ROS), inhibiting the RNA demethylase activity. Desumoylated by SENP1; relieving RNA demethylase inhibition, leading to N(6)-methyladenosine-containing mRNAs demethylation. In terms of processing, ubiquitinated at Lys-58 via 'Lys-48'-linked polyubiquitin chain, leading to its degradation by the proteasome. Deubiquitinated at Lys-58 by USP9X, promoting its stabilizazion. Widely expressed, with highest expression in testis. In testis, present in almost all testicular cell types except elongating and elongated spermatids (at protein level). Among spermatogenic cells, present at high level in spermatocytes; medium levels in spermatogonia and lower levels in round spermatids (at protein level).

It is found in the nucleus speckle. It carries out the reaction an N(6)-methyladenosine in mRNA + 2-oxoglutarate + O2 = an adenosine in mRNA + formaldehyde + succinate + CO2. RNA demethylase activity is inhibited following sumoylation. Inhibition is relieved following desumoylation. Inhibited by histone demethylase inhibitor IOX1. Its function is as follows. Dioxygenase that specifically demethylates N(6)-methyladenosine (m6A) RNA, the most prevalent internal modification of messenger RNA (mRNA) in higher eukaryotes. Demethylates RNA by oxidative demethylation, which requires molecular oxygen, alpha-ketoglutarate and iron. Demethylation of m6A mRNA affects mRNA processing, translation and export. Can also demethylate N(6)-methyladenosine in single-stranded DNA (in vitro). Required for the late meiotic and haploid phases of spermatogenesis by mediating m6A demethylation in spermatocytes and round spermatids: m6A demethylation of target transcripts is required for correct splicing and the production of longer 3'-UTR mRNAs in male germ cells. Involved in paraspeckle assembly, a nuclear membraneless organelle, by undergoing liquid-liquid phase separation. Paraspeckle assembly is coupled with m6A demethylation of RNAs, such as NEAT1 non-coding RNA. Also acts as a negative regulator of T-cell development: inhibits gamma-delta T-cell proliferation via demethylation of JAG1 and NOTCH2 transcripts. Inhibits regulatory T-cell (Treg) recruitment by mediating demethylation and destabilization of CCL28 mRNAs. This is RNA demethylase ALKBH5 from Mus musculus (Mouse).